A 605-amino-acid polypeptide reads, in one-letter code: Xylan O-acetyltransferase 7 (605 aa).

Topologically, residues 1–124 (MKKKKNGMGA…AKQPSPRRTP (124 aa)) are cytoplasmic. Residues 86 to 126 (PCHLLPIQGQGQMQMQQRRKPPPAAAPVAAKQPSPRRTPGP) form a disordered region. A helical; Signal-anchor for type II membrane protein transmembrane segment spans residues 125 to 145 (GPLSFAGALLSLLVVATFLYI). At 146–605 (NDHGNMMPPH…LYAHIVAHAA (460 aa)) the chain is on the lumenal side. N-linked (GlcNAc...) asparagine glycans are attached at residues Asn-192 and Asn-218. Disulfide bonds link Cys-243–Cys-296, Cys-267–Cys-332, Cys-276–Cys-584, and Cys-499–Cys-580. Residues 319–321 (GDS) carry the GDS motif motif. Ser-321 (nucleophile) is an active-site residue. 4 N-linked (GlcNAc...) asparagine glycosylation sites follow: Asn-351, Asn-363, Asn-471, and Asn-508. Asp-579 acts as the Proton donor in catalysis. The DXXH motif signature appears at 579–582 (DCIH). His-582 serves as the catalytic Proton acceptor.

This sequence belongs to the PC-esterase family. TBL subfamily. Expressed in roots, leaves and stems.

It is found in the golgi apparatus membrane. Xylan acetyltransferase required for 2-O- and 3-O-monoacetylation of xylosyl residues in xylan. Catalyzes the 2-O-acetylation of xylan, followed by nonenzymatic acetyl migration to the O-3 position, resulting in products that are monoacetylated at both O-2 and O-3 positions. The chain is Xylan O-acetyltransferase 7 from Oryza sativa subsp. japonica (Rice).